The sequence spans 342 residues: Prenyl transferase ptmC (342 aa).

Residues 17-37 (LSFLTLTVGALALIVVLYISI) form a helical membrane-spanning segment. His-110 provides a ligand contact to isopentenyl diphosphate. 2 residues coordinate Mg(2+): Asp-117 and Asp-121. Arg-126 is a binding site for dimethylallyl diphosphate. N-linked (GlcNAc...) asparagine glycosylation occurs at Asn-154. Residues Lys-210, Thr-211, Gln-240, Asn-247, and Lys-257 each contribute to the dimethylallyl diphosphate site.

Belongs to the FPP/GGPP synthase family.

The protein localises to the membrane. It participates in secondary metabolite biosynthesis. Prenyl transferase; part of the gene cluster that mediates the biosynthesis of the indole diterpenes penitrems. The geranylgeranyl diphosphate (GGPP) synthase ptmG catalyzes the first step in penitrem biosynthesis via conversion of farnesyl pyrophosphate and isopentyl pyrophosphate into geranylgeranyl pyrophosphate (GGPP). Condensation of indole-3-glycerol phosphate with GGPP by the prenyl transferase ptmC then forms 3-geranylgeranylindole (3-GGI). Epoxidation by the FAD-dependent monooxygenase ptmM leads to a epoxidized-GGI that is substrate of the terpene cyclase ptmB for cyclization to yield paspaline. Paspaline is subsequently converted to 13-desoxypaxilline by the cytochrome P450 monooxygenase ptmP, the latter being then converted to paxilline by the cytochrome P450 monooxygenase ptmQ. Paxilline is converted to beta-paxitriol via C-10 ketoreduction by the short-chain dehydrogenase ptmH which can be monoprenylated at the C-20 by the indole diterpene prenyltransferase ptmD. A two-step elimination (acetylation and elimination) process performed by the O-acetyltransferase ptmV and ptmI leads to the production of the prenylated form of penijanthine. The FAD-linked oxidoreductase ptmO then converts the prenylated form of penijanthine into PC-M5 which is in turn transformed into PC-M4 by the aromatic dimethylallyltransferase ptmE. Five sequential oxidative transformations performed by the cytochrome P450 monooxygenases ptmK, ptmU, ptmL, ptmN and ptmJ yield the various penitrem compounds. PtmK, ptmU and ptmM are involved in the formation of the key bicyclic ring of penitrem C via the formation of the intermediates secopenitrem D and penitrem D. PtmL catalyzes the epoxidation of penitrem D and C to yield penitrem B and F, respectively. PtmJ catalyzes the last benzylic hydroxylation to convert penitrem B to prenitrem E and penitrem F to penitrem A. The chain is Prenyl transferase ptmC from Penicillium ochrochloron.